Consider the following 535-residue polypeptide: Glutamate--cysteine ligase (535 aa).

This sequence belongs to the glutamate--cysteine ligase type 1 family. Type 1 subfamily.

It catalyses the reaction L-cysteine + L-glutamate + ATP = gamma-L-glutamyl-L-cysteine + ADP + phosphate + H(+). Its pathway is sulfur metabolism; glutathione biosynthesis; glutathione from L-cysteine and L-glutamate: step 1/2. This chain is Glutamate--cysteine ligase, found in Pseudomonas syringae pv. syringae.